The sequence spans 294 residues: Probable cobalamin biosynthesis protein CobD (294 aa).

The next 4 helical transmembrane spans lie at 52–72, 73–93, 145–165, and 268–288; these read AGLL…IVPF, YAPF…SFAI, DSVV…AVIY, and IYWL…ATGV.

It belongs to the CobD/CbiB family.

It is found in the cell membrane. Its pathway is cofactor biosynthesis; adenosylcobalamin biosynthesis. In terms of biological role, converts cobyric acid to cobinamide by the addition of aminopropanol on the F carboxylic group. The chain is Probable cobalamin biosynthesis protein CobD from Thermococcus kodakarensis (strain ATCC BAA-918 / JCM 12380 / KOD1) (Pyrococcus kodakaraensis (strain KOD1)).